Here is a 555-residue protein sequence, read N- to C-terminus: MRSDQIKKGLKQAPARAMLRAVGVGDEDFGRPFVGVVNTFTDGMPCNFHLRELAQHLKAGLKEAGLFPFEFGAPAISDGISMGTPGMRASLVSREVIADSVELIAQGYLYDGMVGLSACDKTIPGTAMGVIRSGVPGMILYGGTIAPGEWQGRKLTIVEVFEAVGQRAAGKISEEELLEIERRAIPGPGACGGQYTANTMAMALEALGLSPVGYNAIPAVHPEKERATKEAGKILAWAIAHDWKPKDFLTRKSFLNAIAAVAATGGSTNAVLHLLALAKEAGVELSLDDFDQISRKTPVIADLRPWGTYTAWELYEAGGTALVFKRLLEAGLLFGEEKTLTGRTLAEEVERAYREQEGQKVVFPVEKALKPHGGLVVLKGNLAPKGAVLKLAGTERTYFEGPARVFDSEEAAMEKVLKGEIRPGDVVVIRYVGPKGAPGMPEMLSVTSAIVGEGLGPEVALLTDGRFSGGTRGLMIGHIAPEAFVGGPIALLEEGDRIRIDVEGRRLEVLLPEEELERRRARWRPRPPAFTHGLFARYAALVRQADEGAVLEDPL.

Cys-46 serves as a coordination point for [2Fe-2S] cluster. Asp-78 is a Mg(2+) binding site. A [2Fe-2S] cluster-binding site is contributed by Cys-119. Mg(2+) contacts are provided by Asp-120 and Lys-121. Lys-121 carries the N6-carboxylysine modification. Cys-191 contacts [2Fe-2S] cluster. Glu-442 is a binding site for Mg(2+). Ser-468 (proton acceptor) is an active-site residue.

It belongs to the IlvD/Edd family. As to quaternary structure, homodimer. [2Fe-2S] cluster serves as cofactor. It depends on Mg(2+) as a cofactor.

It catalyses the reaction (2R)-2,3-dihydroxy-3-methylbutanoate = 3-methyl-2-oxobutanoate + H2O. The catalysed reaction is (2R,3R)-2,3-dihydroxy-3-methylpentanoate = (S)-3-methyl-2-oxopentanoate + H2O. The protein operates within amino-acid biosynthesis; L-isoleucine biosynthesis; L-isoleucine from 2-oxobutanoate: step 3/4. It functions in the pathway amino-acid biosynthesis; L-valine biosynthesis; L-valine from pyruvate: step 3/4. In terms of biological role, functions in the biosynthesis of branched-chain amino acids. Catalyzes the dehydration of (2R,3R)-2,3-dihydroxy-3-methylpentanoate (2,3-dihydroxy-3-methylvalerate) into 2-oxo-3-methylpentanoate (2-oxo-3-methylvalerate) and of (2R)-2,3-dihydroxy-3-methylbutanoate (2,3-dihydroxyisovalerate) into 2-oxo-3-methylbutanoate (2-oxoisovalerate), the penultimate precursor to L-isoleucine and L-valine, respectively. This is Dihydroxy-acid dehydratase from Thermus thermophilus (strain ATCC 27634 / DSM 579 / HB8).